Reading from the N-terminus, the 537-residue chain is Light-independent protochlorophyllide reductase subunit B (537 aa).

Asp36 provides a ligand contact to [4Fe-4S] cluster. Asp292 acts as the Proton donor in catalysis. 428-429 (GL) serves as a coordination point for substrate. Residues 459-483 (TAGETAGQATEAATAPATPGAPLTG) form a disordered region.

It belongs to the ChlB/BchB/BchZ family. As to quaternary structure, protochlorophyllide reductase is composed of three subunits; BchL, BchN and BchB. Forms a heterotetramer of two BchB and two BchN subunits. It depends on [4Fe-4S] cluster as a cofactor.

The catalysed reaction is chlorophyllide a + oxidized 2[4Fe-4S]-[ferredoxin] + 2 ADP + 2 phosphate = protochlorophyllide a + reduced 2[4Fe-4S]-[ferredoxin] + 2 ATP + 2 H2O. It participates in porphyrin-containing compound metabolism; bacteriochlorophyll biosynthesis (light-independent). Component of the dark-operative protochlorophyllide reductase (DPOR) that uses Mg-ATP and reduced ferredoxin to reduce ring D of protochlorophyllide (Pchlide) to form chlorophyllide a (Chlide). This reaction is light-independent. The NB-protein (BchN-BchB) is the catalytic component of the complex. In Chloroherpeton thalassium (strain ATCC 35110 / GB-78), this protein is Light-independent protochlorophyllide reductase subunit B.